The primary structure comprises 298 residues: uncharacterized protein (298 aa).

The first 19 residues, 1–19, serve as a signal peptide directing secretion; sequence MFRKFLFIQLLIVTSLVKA. Positions 278–298 are disordered; sequence RNNPPLKNNNAKSKNSYETYK. Positions 279–298 are enriched in low complexity; that stretch reads NNPPLKNNNAKSKNSYETYK.

The protein to R.prowazekii RP296.

This is an uncharacterized protein from Rickettsia prowazekii (strain Madrid E).